The sequence spans 411 residues: Basic leucine zipper 10 (411 aa).

Disordered stretches follow at residues 1 to 36 (MNSI…DEVS), 76 to 99 (SLPS…DSGN), 140 to 251 (SVKP…NDLK), and 362 to 411 (NNFA…KCVD). The segment covering 24–36 (PDSSKPVTADEVS) has biased composition (polar residues). Over residues 89 to 98 (DSRFRDRDSG) the composition is skewed to basic and acidic residues. Polar residues-rich tracts occupy residues 146-173 (STSS…TSSL) and 183-193 (SMKQVTSGSSR). Phosphoserine is present on Ser196. Residues 196–206 (SDDEDLDEENE) show a composition bias toward acidic residues. Residues 215-278 (DVKKSRRMLS…DEAAVGNRIL (64 aa)) form the bZIP domain. The basic motif stretch occupies residues 217–236 (KKSRRMLSNRESARRSRRRK). The Nuclear localization signal motif lies at 219–226 (SRRMLSNR). Residues 243–257 (LETQVNDLKGEHSSL) are leucine-zipper. The segment covering 368–390 (PSQTSSPLQRIRNGQNHHVTPSA) has biased composition (polar residues).

Belongs to the bZIP family. As to quaternary structure, forms a heterodimer with BZIP1, BZIP2, BZIP9, BZIP11, BZIP44, BZIP53 and BZIP63. Interacts with ABI3 and forms a complex made of ABI3, BZIP53 and BZIP10. Binding with LSD1 leads to cytoplasmic retention. In terms of tissue distribution, expressed in roots, shoots, stems, young leaves, trichomes, hydathodes, siliques, seeds, and flowers, mostly in vascular tissues.

The protein resides in the nucleus. The protein localises to the cytoplasm. Its function is as follows. Transcription factor that binds to the C-box-like motif (5'-TGCTGACGTCA-3') and G-box-like motif (5'-CCACGTGGCC-3'), ABRE elements, of gene promoters. Binds to the 5'-ACGT-3' motif of seed storage protein (SSP) encoding gene promoters (e.g. At2S and CRU3) and promotes their expression in seeds when in complex with ABI3 and BZIP53. Involved in the defense responses to the biotrophic pathogen Hyaloperonospora parasitica and oxidative stress responses; mediates positively cell death. Promotes BZIP53-mediated response to hypoosmolarity stress that leads to POX1/PRODH1 accumulation. This chain is Basic leucine zipper 10 (BZIP10), found in Arabidopsis thaliana (Mouse-ear cress).